Reading from the N-terminus, the 267-residue chain is FCS-Like Zinc finger 8 (267 aa).

Disordered stretches follow at residues 1 to 29 (MLKK…KTTP) and 124 to 156 (DSPI…GSPR). Composition is skewed to polar residues over residues 15–28 (ETNQ…SKTT) and 126–141 (PISS…NSQP). The FLZ-type zinc-finger motif lies at 221–265 (SFLSCCCNCKKSLGPRDDIFMYRGDRAFCSSECRSIEMMMSEEND).

This sequence belongs to the FLZ family. In terms of assembly, interacts with KIN10 and KIN11 via its FLZ-type zinc finger domain. Interacts with KINB1, KINB2, KINB3 and SNF4 via its N-terminal part. Interacts with HB21/ZHD3.

Its function is as follows. May act as an adapter to facilitate the interaction of SnRK1 complex with effector proteins, conferring tissue- and stimulus-type specific differences in the SnRK1 regulation pathway. The sequence is that of FCS-Like Zinc finger 8 from Arabidopsis thaliana (Mouse-ear cress).